The sequence spans 289 residues: Phosphatidylglycerol--prolipoprotein diacylglyceryl transferase (289 aa).

A run of 4 helical transmembrane segments spans residues 18–38 (FTIY…YVMA), 54–74 (DFVM…YVIF), 86–106 (VFYI…GVLT), and 116–136 (LSFW…QAIG). Arginine 137 provides a ligand contact to a 1,2-diacyl-sn-glycero-3-phospho-(1'-sn-glycerol). Transmembrane regions (helical) follow at residues 177–197 (HPTF…LLLL), 205–225 (GELF…IEGM), and 236–256 (LRTA…LWWY).

The protein belongs to the Lgt family.

The protein resides in the cell membrane. It catalyses the reaction L-cysteinyl-[prolipoprotein] + a 1,2-diacyl-sn-glycero-3-phospho-(1'-sn-glycerol) = an S-1,2-diacyl-sn-glyceryl-L-cysteinyl-[prolipoprotein] + sn-glycerol 1-phosphate + H(+). It participates in protein modification; lipoprotein biosynthesis (diacylglyceryl transfer). Its function is as follows. Catalyzes the transfer of the diacylglyceryl group from phosphatidylglycerol to the sulfhydryl group of the N-terminal cysteine of a prolipoprotein, the first step in the formation of mature lipoproteins. This chain is Phosphatidylglycerol--prolipoprotein diacylglyceryl transferase, found in Halalkalibacterium halodurans (strain ATCC BAA-125 / DSM 18197 / FERM 7344 / JCM 9153 / C-125) (Bacillus halodurans).